A 54-amino-acid polypeptide reads, in one-letter code: 2-aminomuconate deaminase (54 aa).

As to quaternary structure, homohexamer.

It catalyses the reaction (2Z,4E)-2-aminomuconate + H2O = (3E)-2-oxohex-3-enedioate + NH4(+). It functions in the pathway xenobiotic degradation; nitrobenzene degradation. Its function is as follows. Converts 2-aminomuconate to 4-oxalocrotonate, an intermediate step in the biodegradation of nitrobenzene. The protein is 2-aminomuconate deaminase of Ectopseudomonas oleovorans (Pseudomonas oleovorans).